The primary structure comprises 131 residues: Histone H2A type 1-A (131 aa).

Positions 1–23 (MSGRGKQGGKARAKSKSRSSRAG) are disordered. S2 is modified (N-acetylserine). A Phosphoserine; by RPS6KA5 modification is found at S2. Position 4 is a citrulline; alternate (R4). R4 bears the Symmetric dimethylarginine; by PRMT5; alternate mark. N6-(2-hydroxyisobutyryl)lysine is present on K6. A compositionally biased stretch (basic residues) spans 7–19 (QGGKARAKSKSRS). At K10 the chain carries N6-(2-hydroxyisobutyryl)lysine; alternate. Position 10 is an N6-(beta-hydroxybutyryl)lysine; alternate (K10). At K10 the chain carries N6-lactoyllysine; alternate. K10 carries the post-translational modification N6-succinyllysine; alternate. K14 is subject to N6-(beta-hydroxybutyryl)lysine. Glycyl lysine isopeptide (Lys-Gly) (interchain with G-Cter in ubiquitin) cross-links involve residues K14 and K16. K37 bears the N6-(2-hydroxyisobutyryl)lysine; alternate mark. An N6-(beta-hydroxybutyryl)lysine; alternate modification is found at K37. K37 is subject to N6-crotonyllysine; alternate. 2 positions are modified to N6-(2-hydroxyisobutyryl)lysine: K75 and K76. K96 is modified (N6-(2-hydroxyisobutyryl)lysine; alternate). Position 96 is an N6-(beta-hydroxybutyryl)lysine; alternate (K96). At K96 the chain carries N6-succinyllysine; alternate. An N6-glutaryllysine; alternate modification is found at K96. Q105 carries the N5-methylglutamine modification. K119 bears the N6-(2-hydroxyisobutyryl)lysine; alternate mark. At K119 the chain carries N6-(beta-hydroxybutyryl)lysine; alternate. Residues K119 and K120 each carry the N6-crotonyllysine; alternate modification. K119 and K120 each carry N6-glutaryllysine; alternate. K120 is covalently cross-linked (Glycyl lysine isopeptide (Lys-Gly) (interchain with G-Cter in ubiquitin); alternate). Phosphothreonine; by DCAF1 is present on T121. K127 is modified (N6-crotonyllysine).

This sequence belongs to the histone H2A family. The nucleosome is a histone octamer containing two molecules each of H2A, H2B, H3 and H4 assembled in one H3-H4 heterotetramer and two H2A-H2B heterodimers. The octamer wraps approximately 147 bp of DNA. In terms of processing, deiminated on Arg-4 in granulocytes upon calcium entry. Monoubiquitination of Lys-120 (H2AK119Ub) by RING1, TRIM37 and RNF2/RING2 complex gives a specific tag for epigenetic transcriptional repression and participates in X chromosome inactivation of female mammals. It is involved in the initiation of both imprinted and random X inactivation. Ubiquitinated H2A is enriched in inactive X chromosome chromatin. Ubiquitination of H2A functions downstream of methylation of 'Lys-27' of histone H3 (H3K27me). H2AK119Ub by RNF2/RING2 can also be induced by ultraviolet and may be involved in DNA repair. Monoubiquitination of Lys-120 (H2AK119Ub) by TRIM37 may promote transformation of cells in a number of breast cancers. Following DNA double-strand breaks (DSBs), it is ubiquitinated through 'Lys-63' linkage of ubiquitin moieties by the E2 ligase UBE2N and the E3 ligases RNF8 and RNF168, leading to the recruitment of repair proteins to sites of DNA damage. Ubiquitination at Lys-14 and Lys-16 (H2AK13Ub and H2AK15Ub, respectively) in response to DNA damage is initiated by RNF168 that mediates monoubiquitination at these 2 sites, and 'Lys-63'-linked ubiquitin are then conjugated to monoubiquitin; RNF8 is able to extend 'Lys-63'-linked ubiquitin chains in vitro. Deubiquitinated by USP51 at Lys-14 and Lys-16 (H2AK13Ub and H2AK15Ub, respectively) after damaged DNA is repaired. H2AK119Ub and ionizing radiation-induced 'Lys-63'-linked ubiquitination (H2AK13Ub and H2AK15Ub) are distinct events. Post-translationally, phosphorylation on Ser-2 (H2AS1ph) is enhanced during mitosis. Phosphorylation on Ser-2 by RPS6KA5/MSK1 directly represses transcription. Acetylation of H3 inhibits Ser-2 phosphorylation by RPS6KA5/MSK1. Phosphorylation at Thr-121 (H2AT120ph) by DCAF1 is present in the regulatory region of many tumor suppresor genes and down-regulates their transcription. In terms of processing, glutamine methylation at Gln-105 (H2AQ104me) by FBL is specifically dedicated to polymerase I. It is present at 35S ribosomal DNA locus and impairs binding of the FACT complex. Symmetric dimethylation on Arg-4 by the PRDM1/PRMT5 complex may play a crucial role in the germ-cell lineage. Post-translationally, crotonylation (Kcr) is specifically present in male germ cells and marks testis-specific genes in post-meiotic cells, including X-linked genes that escape sex chromosome inactivation in haploid cells. Crotonylation marks active promoters and enhancers and confers resistance to transcriptional repressors. It is also associated with post-meiotically activated genes on autosomes. In terms of processing, lactylated in macrophages by EP300/P300 by using lactoyl-CoA directly derived from endogenous or exogenous lactate, leading to stimulates gene transcription.

The protein localises to the nucleus. Its subcellular location is the chromosome. In terms of biological role, core component of nucleosome. Nucleosomes wrap and compact DNA into chromatin, limiting DNA accessibility to the cellular machineries which require DNA as a template. Histones thereby play a central role in transcription regulation, DNA repair, DNA replication and chromosomal stability. DNA accessibility is regulated via a complex set of post-translational modifications of histones, also called histone code, and nucleosome remodeling. The protein is Histone H2A type 1-A of Homo sapiens (Human).